The chain runs to 367 residues: tRNA/tmRNA (uracil-C(5))-methyltransferase (367 aa).

Positions 190, 218, 223, 239, and 299 each coordinate S-adenosyl-L-methionine. Residue Cys324 is the Nucleophile of the active site. Glu358 (proton acceptor) is an active-site residue.

Belongs to the class I-like SAM-binding methyltransferase superfamily. RNA M5U methyltransferase family. TrmA subfamily.

The catalysed reaction is uridine(54) in tRNA + S-adenosyl-L-methionine = 5-methyluridine(54) in tRNA + S-adenosyl-L-homocysteine + H(+). It carries out the reaction uridine(341) in tmRNA + S-adenosyl-L-methionine = 5-methyluridine(341) in tmRNA + S-adenosyl-L-homocysteine + H(+). In terms of biological role, dual-specificity methyltransferase that catalyzes the formation of 5-methyluridine at position 54 (m5U54) in all tRNAs, and that of position 341 (m5U341) in tmRNA (transfer-mRNA). The protein is tRNA/tmRNA (uracil-C(5))-methyltransferase of Dickeya chrysanthemi (strain Ech1591) (Dickeya zeae (strain Ech1591)).